The sequence spans 227 residues: Cytidylate kinase (227 aa).

7 to 15 is an ATP binding site; it reads GPSGAGKGT.

Belongs to the cytidylate kinase family. Type 1 subfamily.

It localises to the cytoplasm. The catalysed reaction is CMP + ATP = CDP + ADP. The enzyme catalyses dCMP + ATP = dCDP + ADP. The sequence is that of Cytidylate kinase from Actinobacillus succinogenes (strain ATCC 55618 / DSM 22257 / CCUG 43843 / 130Z).